Reading from the N-terminus, the 423-residue chain is Inactive autotransporter heptosyltransferase BimC (423 aa).

Positions 1–10 are enriched in polar residues; sequence MPKVTFSGSA. The disordered stretch occupies residues 1-49; that stretch reads MPKVTFSGSAPTLGVHAPPALDPRQPASPPPAASNGTHARGFSPPADMP. Fe(3+)-binding residues include Cys371, Cys374, Cys390, and Cys402.

This sequence belongs to the glycosyltransferase 9 family. In terms of assembly, homotrimer or homotetramer. The cofactor is Fe(3+).

Its subcellular location is the cell inner membrane. The protein resides in the cytoplasm. In terms of biological role, iron-binding protein which is required for the asymmetric polar distribution of the autotransporter BimA on the bacterial surface prior to its translocation into bacterial periplasm. Lacks heptosyltransferase activity. In Burkholderia thailandensis (strain ATCC 700388 / DSM 13276 / CCUG 48851 / CIP 106301 / E264), this protein is Inactive autotransporter heptosyltransferase BimC.